The chain runs to 186 residues: Peptide deformylase (186 aa).

Fe cation-binding residues include cysteine 113 and histidine 157. Glutamate 158 is a catalytic residue. Histidine 161 serves as a coordination point for Fe cation.

The protein belongs to the polypeptide deformylase family. Fe(2+) serves as cofactor.

It catalyses the reaction N-terminal N-formyl-L-methionyl-[peptide] + H2O = N-terminal L-methionyl-[peptide] + formate. Functionally, removes the formyl group from the N-terminal Met of newly synthesized proteins. Requires at least a dipeptide for an efficient rate of reaction. N-terminal L-methionine is a prerequisite for activity but the enzyme has broad specificity at other positions. This Malacoplasma penetrans (strain HF-2) (Mycoplasma penetrans) protein is Peptide deformylase.